The primary structure comprises 570 residues: Spastin (570 aa).

Topologically, residues 1–35 (MNSGHKARLRGGRACGPVSDGSARGNRLLFYTRSL) are cytoplasmic. The segment at residues 36–52 (SRVPEWLLRVLLLLLRW) is an intramembrane region (helical). At 53–570 (LFQPIRRAMA…NREYGDTTGV (518 aa)) the chain is on the cytoplasmic side. An MIT domain is found at 83–158 (YHKQAFEFIS…SMAEDRLKLL (76 aa)). The segment at 186–269 (APASGAVSKK…SPQRKRDMKN (84 aa)) is disordered. Composition is skewed to polar residues over residues 199 to 208 (LTITNQTSLR), 216 to 242 (TPNA…NQKG), and 251 to 261 (VKASTTATASP). 335–342 (GPPGNGKT) contributes to the ATP binding site.

It belongs to the AAA ATPase family. Spastin subfamily. Homohexamer. The homohexamer is stabilized by ATP-binding. The homohexamer may adopt a ring conformation through which microtubules pass prior to being severed. Interacts with microtubules.

It localises to the membrane. It is found in the cytoplasm. The protein localises to the cytoskeleton. Its subcellular location is the microtubule organizing center. The protein resides in the centrosome. It localises to the perinuclear region. It is found in the nucleus. The catalysed reaction is n ATP + n H2O + a microtubule = n ADP + n phosphate + (n+1) alpha/beta tubulin heterodimers.. ATP-dependent microtubule severing protein that specifically recognizes and cuts microtubules that are polyglutamylated. Preferentially recognizes and acts on microtubules decorated with short polyglutamate tails: severing activity increases as the number of glutamates per tubulin rises from one to eight, but decreases beyond this glutamylation threshold. Microtubule severing promotes reorganization of cellular microtubule arrays and the release of microtubules from the centrosome following nucleation. Required for membrane traffic from the endoplasmic reticulum (ER) to the Golgi and for completion of the abscission stage of cytokinesis. Also plays a role in axon growth and the formation of axonal branches. In Danio rerio (Zebrafish), this protein is Spastin.